We begin with the raw amino-acid sequence, 507 residues long: Maturase K (507 aa).

The protein belongs to the intron maturase 2 family. MatK subfamily.

Its subcellular location is the plastid. It localises to the chloroplast. Its function is as follows. Usually encoded in the trnK tRNA gene intron. Probably assists in splicing its own and other chloroplast group II introns. This chain is Maturase K, found in Magnolia champaca (Yellow jade orchid tree).